A 237-amino-acid polypeptide reads, in one-letter code: Uracil-DNA glycosylase (237 aa).

Asp77 functions as the Proton acceptor in the catalytic mechanism.

Belongs to the uracil-DNA glycosylase (UDG) superfamily. UNG family.

It localises to the cytoplasm. The catalysed reaction is Hydrolyzes single-stranded DNA or mismatched double-stranded DNA and polynucleotides, releasing free uracil.. Its function is as follows. Excises uracil residues from the DNA which can arise as a result of misincorporation of dUMP residues by DNA polymerase or due to deamination of cytosine. In Acinetobacter baumannii (strain ACICU), this protein is Uracil-DNA glycosylase.